The following is a 434-amino-acid chain: Trigger factor (434 aa).

The 86-residue stretch at 161–246 folds into the PPIase FKBP-type domain; sequence EDRVTVDFTG…LKKVEQRELP (86 aa).

Belongs to the FKBP-type PPIase family. Tig subfamily.

The protein resides in the cytoplasm. It carries out the reaction [protein]-peptidylproline (omega=180) = [protein]-peptidylproline (omega=0). Its function is as follows. Involved in protein export. Acts as a chaperone by maintaining the newly synthesized protein in an open conformation. Functions as a peptidyl-prolyl cis-trans isomerase. This chain is Trigger factor, found in Sodalis glossinidius (strain morsitans).